The chain runs to 573 residues: Dihydroxy-acid dehydratase (573 aa).

C62 is a binding site for [2Fe-2S] cluster. D94 contacts Mg(2+). C135 is a binding site for [2Fe-2S] cluster. Mg(2+)-binding residues include D136 and K137. The residue at position 137 (K137) is an N6-carboxylysine. C212 is a binding site for [2Fe-2S] cluster. E463 is a Mg(2+) binding site. S489 functions as the Proton acceptor in the catalytic mechanism.

Belongs to the IlvD/Edd family. In terms of assembly, homodimer. The cofactor is [2Fe-2S] cluster. Mg(2+) serves as cofactor.

The catalysed reaction is (2R)-2,3-dihydroxy-3-methylbutanoate = 3-methyl-2-oxobutanoate + H2O. It catalyses the reaction (2R,3R)-2,3-dihydroxy-3-methylpentanoate = (S)-3-methyl-2-oxopentanoate + H2O. The protein operates within amino-acid biosynthesis; L-isoleucine biosynthesis; L-isoleucine from 2-oxobutanoate: step 3/4. It functions in the pathway amino-acid biosynthesis; L-valine biosynthesis; L-valine from pyruvate: step 3/4. In terms of biological role, functions in the biosynthesis of branched-chain amino acids. Catalyzes the dehydration of (2R,3R)-2,3-dihydroxy-3-methylpentanoate (2,3-dihydroxy-3-methylvalerate) into 2-oxo-3-methylpentanoate (2-oxo-3-methylvalerate) and of (2R)-2,3-dihydroxy-3-methylbutanoate (2,3-dihydroxyisovalerate) into 2-oxo-3-methylbutanoate (2-oxoisovalerate), the penultimate precursor to L-isoleucine and L-valine, respectively. The sequence is that of Dihydroxy-acid dehydratase from Arthrobacter sp. (strain FB24).